The chain runs to 306 residues: Nucleotide-binding protein MUL_1815 (306 aa).

29–36 (GLSGAGRG) provides a ligand contact to ATP. Residue 80–83 (DVRS) participates in GTP binding.

This sequence belongs to the RapZ-like family.

Displays ATPase and GTPase activities. This is Nucleotide-binding protein MUL_1815 from Mycobacterium ulcerans (strain Agy99).